The sequence spans 236 residues: Flagellar L-ring protein (236 aa).

A signal peptide spans 1 to 16 (MRMRITAILAAGLLAG). Cys-17 is lipidated: N-palmitoyl cysteine. Cys-17 is lipidated: S-diacylglycerol cysteine. The tract at residues 96–143 (ENETDRSRKNSSGFNLGASGESQTSDFAWSGDLEYGSNTKTEGDGKTE) is disordered. Polar residues predominate over residues 105–122 (NSSGFNLGASGESQTSDF).

The protein belongs to the FlgH family. As to quaternary structure, the basal body constitutes a major portion of the flagellar organelle and consists of four rings (L,P,S, and M) mounted on a central rod.

The protein resides in the cell outer membrane. It is found in the bacterial flagellum basal body. Its function is as follows. Assembles around the rod to form the L-ring and probably protects the motor/basal body from shearing forces during rotation. This Sinorhizobium medicae (strain WSM419) (Ensifer medicae) protein is Flagellar L-ring protein.